The following is a 166-amino-acid chain: 3-isopropylmalate dehydratase small subunit (166 aa).

The protein belongs to the LeuD family. LeuD type 2 subfamily. Heterodimer of LeuC and LeuD.

The enzyme catalyses (2R,3S)-3-isopropylmalate = (2S)-2-isopropylmalate. The protein operates within amino-acid biosynthesis; L-leucine biosynthesis; L-leucine from 3-methyl-2-oxobutanoate: step 2/4. Its function is as follows. Catalyzes the isomerization between 2-isopropylmalate and 3-isopropylmalate, via the formation of 2-isopropylmaleate. This is 3-isopropylmalate dehydratase small subunit from Nautilia profundicola (strain ATCC BAA-1463 / DSM 18972 / AmH).